Reading from the N-terminus, the 62-residue chain is Zinc metalloproteinase-disintegrin-like BaG (62 aa).

The Peptidase M12B domain occupies 24–54 (KTDLLNRSHDNAQLSPINLVVAVIMAHEMGH). Asparagine 29 carries an N-linked (GlcNAc...) asparagine glycan. Histidine 50 contacts Zn(2+). Glutamate 51 is an active-site residue. A Zn(2+)-binding site is contributed by histidine 54.

It belongs to the venom metalloproteinase (M12B) family. P-III subfamily. P-IIIc sub-subfamily. As to quaternary structure, dimer. It depends on Zn(2+) as a cofactor. The N-terminus is blocked. Expressed by the venom gland.

It localises to the secreted. Inhibited by EDTA, and 1,10-phenanthroline. Its function is as follows. Snake venom Zinc metalloproteinase that inhibits ADP-induced platelet aggregation and inhibits the alpha-5/beta-1 (ITGA5/ITGB1) integrin, a fibronectin receptor. Has caseinolytic activity. Induces the detachment of cells that are bound to fibronectin. The chain is Zinc metalloproteinase-disintegrin-like BaG from Bothrops alternatus (Urutu).